Reading from the N-terminus, the 428-residue chain is Something about silencing protein 10 (428 aa).

The interval 1 to 93 is disordered; sequence MDSDGDDYVM…NTMDWGSKRS (93 aa). 2 stretches are compositionally biased toward acidic residues: residues 15–24 and 46–62; these read QEYDDEEREI and SDDDDDDDDDDEEEQQD. S152, S323, S324, and S337 each carry phosphoserine. The tract at residues 317–386 is disordered; it reads GQQASVSSDD…LRNPRVKHRG (70 aa). Residues 324 to 336 are compositionally biased toward acidic residues; it reads SDDDDNDDDDDAE. Over residues 344–353 the composition is skewed to acidic residues; the sequence is EEAGEEEEEE. Residues 370 to 386 are compositionally biased toward basic residues; that stretch reads TPHRKKELRNPRVKHRG.

It belongs to the SAS10 family.

It is found in the nucleus. Functionally, essential for gene silencing: has a role in the structure of silenced chromatin. May be involved in gene regulation during development. Binds RNA. The chain is Something about silencing protein 10 from Drosophila melanogaster (Fruit fly).